Reading from the N-terminus, the 79-residue chain is Conotoxin Kt6.1 (79 aa).

Residues 1-22 (MKLTCVLIISVLFLTASQLITA) form the signal peptide. Residues 23-47 (VYSRDKQQYRAARLRDEMRNLKGAR) constitute a propeptide that is removed on maturation. Intrachain disulfides connect Cys-49/Cys-62, Cys-56/Cys-67, and Cys-61/Cys-77. 4-hydroxyproline is present on residues Pro-60 and Pro-63.

Belongs to the conotoxin O1 superfamily. As to expression, expressed by the venom duct.

The protein localises to the secreted. In terms of biological role, ion channel inhibitor that inhibits the increase in intracellular calcium upon depolarization in DRG neurons. In vivo, both intraperitoneal and intracranial injections into mice induce hyperactivity. The chain is Conotoxin Kt6.1 from Conus kintoki (Cone snail).